Consider the following 338-residue polypeptide: Ketol-acid reductoisomerase (NADP(+)) (338 aa).

Residues 1–181 (MKVFYDKDAD…GGGRAGIIET (181 aa)) form the KARI N-terminal Rossmann domain. Residues 24–27 (YGSQ), arginine 47, and serine 52 each bind NADP(+). Histidine 107 is a catalytic residue. Glycine 133 contributes to the NADP(+) binding site. The KARI C-terminal knotted domain occupies 182–327 (NFREETETDL…AKLRSMMPWI (146 aa)). Mg(2+)-binding residues include aspartate 190, glutamate 194, glutamate 226, and glutamate 230. Serine 251 is a substrate binding site.

This sequence belongs to the ketol-acid reductoisomerase family. Mg(2+) is required as a cofactor.

It carries out the reaction (2R)-2,3-dihydroxy-3-methylbutanoate + NADP(+) = (2S)-2-acetolactate + NADPH + H(+). The catalysed reaction is (2R,3R)-2,3-dihydroxy-3-methylpentanoate + NADP(+) = (S)-2-ethyl-2-hydroxy-3-oxobutanoate + NADPH + H(+). It participates in amino-acid biosynthesis; L-isoleucine biosynthesis; L-isoleucine from 2-oxobutanoate: step 2/4. It functions in the pathway amino-acid biosynthesis; L-valine biosynthesis; L-valine from pyruvate: step 2/4. Its function is as follows. Involved in the biosynthesis of branched-chain amino acids (BCAA). Catalyzes an alkyl-migration followed by a ketol-acid reduction of (S)-2-acetolactate (S2AL) to yield (R)-2,3-dihydroxy-isovalerate. In the isomerase reaction, S2AL is rearranged via a Mg-dependent methyl migration to produce 3-hydroxy-3-methyl-2-ketobutyrate (HMKB). In the reductase reaction, this 2-ketoacid undergoes a metal-dependent reduction by NADPH to yield (R)-2,3-dihydroxy-isovalerate. The protein is Ketol-acid reductoisomerase (NADP(+)) of Paraburkholderia phytofirmans (strain DSM 17436 / LMG 22146 / PsJN) (Burkholderia phytofirmans).